The sequence spans 208 residues: Uracil phosphoribosyltransferase (208 aa).

Residues Arg78, Arg103, and 130–138 contribute to the 5-phospho-alpha-D-ribose 1-diphosphate site; that span reads DPMFATGGT. Uracil-binding positions include Ile193 and 198-200; that span reads GDA. Asp199 is a binding site for 5-phospho-alpha-D-ribose 1-diphosphate.

The protein belongs to the UPRTase family. The cofactor is Mg(2+).

The enzyme catalyses UMP + diphosphate = 5-phospho-alpha-D-ribose 1-diphosphate + uracil. Its pathway is pyrimidine metabolism; UMP biosynthesis via salvage pathway; UMP from uracil: step 1/1. With respect to regulation, allosterically activated by GTP. In terms of biological role, catalyzes the conversion of uracil and 5-phospho-alpha-D-ribose 1-diphosphate (PRPP) to UMP and diphosphate. The chain is Uracil phosphoribosyltransferase from Campylobacter concisus (strain 13826).